We begin with the raw amino-acid sequence, 151 residues long: Large ribosomal subunit protein bL17 (151 aa).

This sequence belongs to the bacterial ribosomal protein bL17 family. Part of the 50S ribosomal subunit. Contacts protein L32.

This chain is Large ribosomal subunit protein bL17, found in Chlorobium limicola (strain DSM 245 / NBRC 103803 / 6330).